We begin with the raw amino-acid sequence, 79 residues long: Small ribosomal subunit protein bS18 (79 aa).

This sequence belongs to the bacterial ribosomal protein bS18 family. In terms of assembly, part of the 30S ribosomal subunit. Forms a tight heterodimer with protein bS6.

In terms of biological role, binds as a heterodimer with protein bS6 to the central domain of the 16S rRNA, where it helps stabilize the platform of the 30S subunit. The sequence is that of Small ribosomal subunit protein bS18 from Ureaplasma urealyticum serovar 10 (strain ATCC 33699 / Western).